Reading from the N-terminus, the 64-residue chain is DNA gyrase inhibitor YacG (64 aa).

Zn(2+) contacts are provided by Cys-9, Cys-12, Cys-28, and Cys-32. Residues 42 to 64 form a disordered region; that stretch reads DEENAIPGAPDMSDSDGWSEEQY. Positions 54–64 are enriched in acidic residues; that stretch reads SDSDGWSEEQY.

It belongs to the DNA gyrase inhibitor YacG family. Interacts with GyrB. Requires Zn(2+) as cofactor.

In terms of biological role, inhibits all the catalytic activities of DNA gyrase by preventing its interaction with DNA. Acts by binding directly to the C-terminal domain of GyrB, which probably disrupts DNA binding by the gyrase. This Vibrio vulnificus (strain CMCP6) protein is DNA gyrase inhibitor YacG.